We begin with the raw amino-acid sequence, 156 residues long: Small ribosomal subunit protein uS7 (156 aa).

It belongs to the universal ribosomal protein uS7 family. In terms of assembly, part of the 30S ribosomal subunit. Contacts proteins S9 and S11.

In terms of biological role, one of the primary rRNA binding proteins, it binds directly to 16S rRNA where it nucleates assembly of the head domain of the 30S subunit. Is located at the subunit interface close to the decoding center, probably blocks exit of the E-site tRNA. The protein is Small ribosomal subunit protein uS7 of Clavibacter sepedonicus (Clavibacter michiganensis subsp. sepedonicus).